A 338-amino-acid polypeptide reads, in one-letter code: Ketol-acid reductoisomerase (NADP(+)) (338 aa).

In terms of domain architecture, KARI N-terminal Rossmann spans 1–181; that stretch reads MRVFYDKDCD…GGGRTGIIET (181 aa). Residues 24 to 27, arginine 47, serine 50, threonine 52, and 82 to 85 each bind NADP(+); these read YGSQ and DEFQ. Histidine 107 is an active-site residue. An NADP(+)-binding site is contributed by glycine 133. Residues 182–327 enclose the KARI C-terminal knotted domain; sequence TFKDETETDL…EKLRAMMPWI (146 aa). Mg(2+) is bound by residues aspartate 190, glutamate 194, glutamate 226, and glutamate 230. Serine 251 serves as a coordination point for substrate.

Belongs to the ketol-acid reductoisomerase family. Mg(2+) serves as cofactor.

It carries out the reaction (2R)-2,3-dihydroxy-3-methylbutanoate + NADP(+) = (2S)-2-acetolactate + NADPH + H(+). The enzyme catalyses (2R,3R)-2,3-dihydroxy-3-methylpentanoate + NADP(+) = (S)-2-ethyl-2-hydroxy-3-oxobutanoate + NADPH + H(+). It participates in amino-acid biosynthesis; L-isoleucine biosynthesis; L-isoleucine from 2-oxobutanoate: step 2/4. It functions in the pathway amino-acid biosynthesis; L-valine biosynthesis; L-valine from pyruvate: step 2/4. Its function is as follows. Involved in the biosynthesis of branched-chain amino acids (BCAA). Catalyzes an alkyl-migration followed by a ketol-acid reduction of (S)-2-acetolactate (S2AL) to yield (R)-2,3-dihydroxy-isovalerate. In the isomerase reaction, S2AL is rearranged via a Mg-dependent methyl migration to produce 3-hydroxy-3-methyl-2-ketobutyrate (HMKB). In the reductase reaction, this 2-ketoacid undergoes a metal-dependent reduction by NADPH to yield (R)-2,3-dihydroxy-isovalerate. The sequence is that of Ketol-acid reductoisomerase (NADP(+)) from Pseudomonas paraeruginosa (strain DSM 24068 / PA7) (Pseudomonas aeruginosa (strain PA7)).